We begin with the raw amino-acid sequence, 89 residues long: Protein RALF-like 5 (89 aa).

The first 25 residues, 1-25 (MLKAQVFMFVTVLVFVCVFINSNDA), serve as a signal peptide directing secretion. 2 disulfide bridges follow: Cys39–Cys48 and Cys61–Cys67.

Belongs to the plant rapid alkalinization factor (RALF) family.

The protein localises to the secreted. Functionally, cell signaling peptide that may regulate plant stress, growth, and development. Mediates a rapid alkalinization of extracellular space by mediating a transient increase in the cytoplasmic Ca(2+) concentration leading to a calcium-dependent signaling events through a cell surface receptor and a concomitant activation of some intracellular mitogen-activated protein kinases. The sequence is that of Protein RALF-like 5 (RALFL5) from Arabidopsis thaliana (Mouse-ear cress).